A 530-amino-acid polypeptide reads, in one-letter code: Tyrosinase (530 aa).

Positions 1–18 (MLLAALCCLLWSFRTSTG) are cleaved as a signal peptide. Residues 19–473 (HFPRACASSK…IKPYLEQASR (455 aa)) lie on the Lumenal, melanosome side of the membrane. N-linked (GlcNAc...) asparagine glycosylation is found at Asn-86, Asn-111, and Asn-161. Residues His-180, His-202, and His-211 each contribute to the Cu cation site. Asn-230 and Asn-337 each carry an N-linked (GlcNAc...) asparagine glycan. Residues His-363 and His-367 each coordinate Cu cation. An N-linked (GlcNAc...) asparagine glycan is attached at Asn-371. A Cu cation-binding site is contributed by His-390. Residues 474–494 (IWPWLIGAAVVGCVVTAVLGG) form a helical membrane-spanning segment. The Cytoplasmic portion of the chain corresponds to 495-530 (LTSLLCRRNRKQLHEEKQPLLMEKEDYHSLLYQTHL).

It belongs to the tyrosinase family. As to quaternary structure, forms an OPN3-dependent complex with DCT in response to blue light in melanocytes. The cofactor is Cu(2+). Glycosylated.

The protein localises to the melanosome membrane. It is found in the melanosome. It carries out the reaction 2 L-dopa + O2 = 2 L-dopaquinone + 2 H2O. The catalysed reaction is L-tyrosine + O2 = L-dopaquinone + H2O. It catalyses the reaction 2 5,6-dihydroxyindole-2-carboxylate + O2 = 2 indole-5,6-quinone-2-carboxylate + 2 H2O. Functionally, this is a copper-containing oxidase that functions in the formation of pigments such as melanins and other polyphenolic compounds. Catalyzes the initial and rate limiting step in the cascade of reactions leading to melanin production from tyrosine. In addition to hydroxylating tyrosine to DOPA (3,4-dihydroxyphenylalanine), also catalyzes the oxidation of DOPA to DOPA-quinone, and possibly the oxidation of DHI (5,6-dihydroxyindole) to indole-5,6 quinone. The sequence is that of Tyrosinase (TYR) from Canis lupus familiaris (Dog).